The chain runs to 735 residues: MIP-related peptides (735 aa).

A signal peptide spans 1-20; the sequence is MCTRPGLAALLVLMTSCASS. A propeptide spanning residues 21–135 is cleaved from the precursor; that stretch reads FSRADTQSAS…EDSDTKVDTR (115 aa). The segment covering 33 to 65 has biased composition (low complexity); that stretch reads ALSAASADAQAARQQQEQHLVAQQQQQQQQQQQ. Disordered stretches follow at residues 33–212 and 229–251; these read ALSA…FGKK and FGKKSSGESAGDSGYISVASRGS. Polar residues-rich tracts occupy residues 66-76 and 101-125; these read HSNNNEPQQRA and PVSQPDLSPDFSNPMGSSLSQSGTP. Phenylalanine 142, phenylalanine 153, and phenylalanine 164 each carry phenylalanine amide. Residues 142–159 show a composition bias toward basic residues; that stretch reads FGKKRGQAPRFFGKKRAM. Residues 168–184 constitute a propeptide that is removed on maturation; the sequence is SSEFPTSNSEQLALDTR. Position 190 is a phenylalanine amide (phenylalanine 190). The propeptide occupies 194-203; it reads SFPESNREQR. The segment covering 194 to 204 has biased composition (basic and acidic residues); sequence SFPESNREQRG. Phenylalanine 209 and phenylalanine 229 each carry phenylalanine amide. Residues 214–229 constitute a propeptide, linker peptide; it reads FDENVDIDERAAPRFF. A propeptide spanning residues 233–249 is cleaved from the precursor; sequence SSGESAGDSGYISVASR. Phenylalanine amide is present on phenylalanine 255. The propeptide at 259–267 is linker peptide; the sequence is QDDDIMIAA. Residue phenylalanine 274 is modified to Phenylalanine amide. Positions 279 to 287 are cleaved as a propeptide — linker peptide; it reads SDDNVALDL. Phenylalanine 294 carries the post-translational modification Phenylalanine amide. A propeptide spanning residues 298–311 is cleaved from the precursor; the sequence is QSSDLDDEISVALR. Phenylalanine 317 is modified (phenylalanine amide). The propeptide occupies 321-332; it reads RADDEDILLGER. Phenylalanine 338 bears the Phenylalanine amide mark. The propeptide occupies 342–353; the sequence is RANDENISFSLR. 2 disordered regions span residues 352-373 and 381-400; these read LRGSPRFFGKKRSDESDDDNIG and RFFGKKRSDETDDENIGLMA. A Phenylalanine amide modification is found at phenylalanine 359. Positions 363–377 are excised as a propeptide; that stretch reads RSDESDDDNIGLVAR. Residue phenylalanine 383 is modified to Phenylalanine amide. The propeptide occupies 387–401; sequence RSDETDDENIGLMAR. Phenylalanine 407 bears the Phenylalanine amide mark. Residues 412-426 constitute a propeptide, linker peptide; the sequence is SDGLDDGGNIIDVAT. The segment at 430–464 is disordered; sequence PRFFGKKRSNSDSSDKSSDSALSSSESGRQTRQAP. Phenylalanine amide is present on phenylalanine 433. Residues 437–461 constitute a propeptide that is removed on maturation; it reads RSNSDSSDKSSDSALSSSESGRQTR. A compositionally biased stretch (basic and acidic residues) spans 438 to 447; it reads SNSDSSDKSS. At glutamine 462 the chain carries Pyrrolidone carboxylic acid. Phenylalanine 467 is subject to Phenylalanine amide. Residues 471–493 constitute a propeptide that is removed on maturation; sequence YVDEHHVSKRAAATAFPLIIEAR. Pyrrolidone carboxylic acid is present on glutamine 494. Phenylalanine amide is present on phenylalanine 499. Positions 503 to 509 are excised as a propeptide; sequence EYRYPPR. The residue at position 515 (isoleucine 515) is an Isoleucine amide. Residues 519-546 constitute a propeptide that is removed on maturation; it reads FSLYRSPGKYSLSSPYMSAKEFKETFRR. The residue at position 552 (methionine 552) is a Methionine amide. The propeptide occupies 556 to 585; the sequence is TAELNEEGSDDFTNDDTDDENEYDETVLFK. Residue valine 592 is modified to Valine amide. At leucine 601 the chain carries Leucine amide. Isoleucine 610 is modified (isoleucine amide). A Valine amide modification is found at valine 619. Isoleucine amide is present on isoleucine 628. A propeptide spans 632-661 (linker peptide); sequence DLDWYQKALCAEADILELDDCADFLGNDDV. Glutamine 664 carries the pyrrolidone carboxylic acid modification. The residue at position 669 (isoleucine 669) is an Isoleucine amide. Residues 674–705 constitute a propeptide, linker peptide; it reads GEDVSERDYAQLLEALSRLQAIKQIKARIQNE. At valine 714 the chain carries Valine amide. A propeptide spanning residues 715–735 is cleaved from the precursor; the sequence is GRRSEYNLGPFDEFVDESMER.

Expressed in the CNS and peripheral tissues (the digestive tract, vasculature, and the reproductive organs).

The protein resides in the secreted. Has some structural and functional features similar to vertebrate opioid peptides. AMRPs are inhibitory on Aplysia esophagus, penis retractor muscle, and body wall muscle. The sequence is that of MIP-related peptides (MRP) from Aplysia californica (California sea hare).